The primary structure comprises 314 residues: Olfactory receptor 8U9 (314 aa).

Residues 1–25 are Extracellular-facing; the sequence is MAQINCTQVTEFILVGLTDREELKM. N-linked (GlcNAc...) asparagine glycosylation occurs at asparagine 5. The chain crosses the membrane as a helical span at residues 26–46; it reads PLFVVFLSIYLFTTLGNLGLI. The Cytoplasmic portion of the chain corresponds to 47–54; it reads LVIRTDAR. Residues 55–75 form a helical membrane-spanning segment; it reads LHTPMYFFLSNLAFVDFCYSS. At 76–99 the chain is on the extracellular side; sequence VITPKMLGNFLYKQNMISFNACAA. A disulfide bond links cysteine 97 and cysteine 189. A helical membrane pass occupies residues 100 to 120; sequence QLGCFLAFMTAECLLLASMAY. Residues 121-133 are Cytoplasmic-facing; the sequence is DRYVAICNPLLYM. The chain crosses the membrane as a helical span at residues 134–154; that stretch reads VLMSPGICFQLVAAPYSYSFL. Residues 155–196 lie on the Extracellular side of the membrane; sequence VALFHAILTFRLCYCHSNAINHFYCDDMPLLRLTCSDTHSKQ. A helical membrane pass occupies residues 197-217; the sequence is LWIFVCAGIMFISSLLIVFIS. The Cytoplasmic portion of the chain corresponds to 218–237; that stretch reads YTFIISAILRMRSAEGRRKA. A helical transmembrane segment spans residues 238 to 258; the sequence is FSTCGSHMLAVTIFYGTLIFM. Residues 259-271 lie on the Extracellular side of the membrane; it reads YLQPSSNHSLDTD. N-linked (GlcNAc...) asparagine glycosylation occurs at asparagine 265. Residues 272–292 form a helical membrane-spanning segment; that stretch reads KMASVFYTVIIPMLNPLIYSL. The Cytoplasmic portion of the chain corresponds to 293–314; it reads RNKEVKDALKKLIASKNQMLSS.

This sequence belongs to the G-protein coupled receptor 1 family.

It is found in the cell membrane. Its function is as follows. Potential odorant receptor. The chain is Olfactory receptor 8U9 from Mus musculus (Mouse).